The following is a 255-amino-acid chain: Thiazole synthase (255 aa).

The Schiff-base intermediate with DXP role is filled by lysine 96. Residues glycine 157, 183–184, and 205–206 contribute to the 1-deoxy-D-xylulose 5-phosphate site; these read AG and NT.

It belongs to the ThiG family. Homotetramer. Forms heterodimers with either ThiH or ThiS.

It is found in the cytoplasm. It carries out the reaction [ThiS sulfur-carrier protein]-C-terminal-Gly-aminoethanethioate + 2-iminoacetate + 1-deoxy-D-xylulose 5-phosphate = [ThiS sulfur-carrier protein]-C-terminal Gly-Gly + 2-[(2R,5Z)-2-carboxy-4-methylthiazol-5(2H)-ylidene]ethyl phosphate + 2 H2O + H(+). Its pathway is cofactor biosynthesis; thiamine diphosphate biosynthesis. Catalyzes the rearrangement of 1-deoxy-D-xylulose 5-phosphate (DXP) to produce the thiazole phosphate moiety of thiamine. Sulfur is provided by the thiocarboxylate moiety of the carrier protein ThiS. In vitro, sulfur can be provided by H(2)S. This Staphylococcus haemolyticus (strain JCSC1435) protein is Thiazole synthase.